Consider the following 371-residue polypeptide: Leu/Ile/Val-binding protein homolog 2 (371 aa).

The signal sequence occupies residues 1–23 (MKKSLFCGVCLCALVAMGGTSFA).

The protein belongs to the leucine-binding protein family.

In terms of biological role, component of an amino-acid transport system. The sequence is that of Leu/Ile/Val-binding protein homolog 2 from Brucella abortus (strain 2308).